The sequence spans 86 residues: Small ribosomal subunit protein bS18 (86 aa).

Belongs to the bacterial ribosomal protein bS18 family. Part of the 30S ribosomal subunit. Forms a tight heterodimer with protein bS6.

In terms of biological role, binds as a heterodimer with protein bS6 to the central domain of the 16S rRNA, where it helps stabilize the platform of the 30S subunit. The sequence is that of Small ribosomal subunit protein bS18 from Campylobacter lari (strain RM2100 / D67 / ATCC BAA-1060).